The following is a 29-amino-acid chain: M-poneritoxin-Ng3d (29 aa).

Expressed by the venom gland.

It localises to the secreted. Has activity against some Gram-positive bacteria and S.cerevisiae. Has a non-hemolytic activity. In Neoponera goeldii (Ponerine ant), this protein is M-poneritoxin-Ng3d.